The sequence spans 98 residues: NADH-ubiquinone oxidoreductase chain 4L (98 aa).

3 helical membrane-spanning segments follow: residues 1 to 21 (MLSINLNLIVAFLLALMGVLI), 29 to 49 (TLLCLEGMMLSLFILMTLLIT), and 59 to 79 (TPLILLVFSACEAAIGLALLV).

Belongs to the complex I subunit 4L family. As to quaternary structure, core subunit of respiratory chain NADH dehydrogenase (Complex I) which is composed of 45 different subunits.

Its subcellular location is the mitochondrion inner membrane. The catalysed reaction is a ubiquinone + NADH + 5 H(+)(in) = a ubiquinol + NAD(+) + 4 H(+)(out). Core subunit of the mitochondrial membrane respiratory chain NADH dehydrogenase (Complex I) which catalyzes electron transfer from NADH through the respiratory chain, using ubiquinone as an electron acceptor. Part of the enzyme membrane arm which is embedded in the lipid bilayer and involved in proton translocation. The chain is NADH-ubiquinone oxidoreductase chain 4L (MT-ND4L) from Sminthopsis crassicaudata (Fat-tailed dunnart).